Consider the following 101-residue polypeptide: Small ribosomal subunit protein bS18c (101 aa).

This sequence belongs to the bacterial ribosomal protein bS18 family. In terms of assembly, part of the 30S ribosomal subunit.

Its subcellular location is the plastid. It is found in the chloroplast. The chain is Small ribosomal subunit protein bS18c (rps18) from Arabidopsis thaliana (Mouse-ear cress).